The following is a 21-amino-acid chain: Buforin-2 (21 aa).

Lys21 carries the N6-(2-hydroxyisobutyryl)lysine; alternate modification.

This sequence belongs to the histone H2A family. As to expression, expressed by the skin glands.

The protein resides in the secreted. Antimicrobial peptide with potent activity against some Gram-positive and Gram-negative bacteria. Does not permeabilize membrane, but internalizes into bacterial cells and alter specific gene expression involved in bacterial resistance mechanisms. Has the ability to agglutinate E.coli, and lipid vesicles. Shows a weak hemolytic activity, and is not cytotoxic to monocytes. In Sphaenorhynchus lacteus (Orinoco lime treefrog), this protein is Buforin-2.